A 195-amino-acid chain; its full sequence is GRF1-interacting factor 2 (195 aa).

The tract at residues 166-195 (QQPETGLGGNVGLRGGKQDGADGQGKDDGK) is disordered. The span at 171–180 (GLGGNVGLRG) shows a compositional bias: gly residues. The span at 181–195 (GKQDGADGQGKDDGK) shows a compositional bias: basic and acidic residues.

The protein belongs to the SS18 family. As to quaternary structure, interacts with GRF1. Predominantly expressed in shoot tips containing the shoot apical meristem (SAM) and flower buds. Also expressed in mature flowers.

Functionally, transcription coactivator that plays a role in the regulation of cell expansion in leaf and cotyledons tissues. Component of a network formed by miR396, the GRFs and their interacting factors (GIFs) acting in the regulation of meristem function, at least partially through the control of cell proliferation. GIFs are involved in the positive regulation of cell proliferation of lateral organs in a functionally redundant manner. The sequence is that of GRF1-interacting factor 2 (GIF2) from Arabidopsis thaliana (Mouse-ear cress).